The sequence spans 511 residues: Maturase K (511 aa).

This sequence belongs to the intron maturase 2 family. MatK subfamily.

The protein localises to the plastid. The protein resides in the chloroplast. Functionally, usually encoded in the trnK tRNA gene intron. Probably assists in splicing its own and other chloroplast group II introns. The sequence is that of Maturase K from Bromelia plumieri (Karatas).